The following is a 406-amino-acid chain: Phosphopentomutase (406 aa).

Mn(2+) is bound by residues aspartate 10, aspartate 305, histidine 310, aspartate 346, histidine 347, and histidine 358.

Belongs to the phosphopentomutase family. Mn(2+) is required as a cofactor.

It localises to the cytoplasm. It catalyses the reaction 2-deoxy-alpha-D-ribose 1-phosphate = 2-deoxy-D-ribose 5-phosphate. The catalysed reaction is alpha-D-ribose 1-phosphate = D-ribose 5-phosphate. The protein operates within carbohydrate degradation; 2-deoxy-D-ribose 1-phosphate degradation; D-glyceraldehyde 3-phosphate and acetaldehyde from 2-deoxy-alpha-D-ribose 1-phosphate: step 1/2. Isomerase that catalyzes the conversion of deoxy-ribose 1-phosphate (dRib-1-P) and ribose 1-phosphate (Rib-1-P) to deoxy-ribose 5-phosphate (dRib-5-P) and ribose 5-phosphate (Rib-5-P), respectively. The sequence is that of Phosphopentomutase from Rhizobium leguminosarum bv. trifolii (strain WSM2304).